The chain runs to 98 residues: MADIKFRPLHDRVVVRRVESEAKTAGGIIIPDTAKEKPQEGEVVAAGAGARDEAGKLVPLDVKAGDRVLFGKWSGTEVKIGGEDLLIMKESDILGIVG.

Belongs to the GroES chaperonin family. Heptamer of 7 subunits arranged in a ring. Interacts with the chaperonin GroEL.

It localises to the cytoplasm. In terms of biological role, together with the chaperonin GroEL, plays an essential role in assisting protein folding. The GroEL-GroES system forms a nano-cage that allows encapsulation of the non-native substrate proteins and provides a physical environment optimized to promote and accelerate protein folding. GroES binds to the apical surface of the GroEL ring, thereby capping the opening of the GroEL channel. This Brucella abortus (strain S19) protein is Co-chaperonin GroES.